We begin with the raw amino-acid sequence, 598 residues long: Ceramide transfer protein (598 aa).

Positions 1–11 are enriched in polar residues; that stretch reads MSDNQSWNSSG. A disordered region spans residues 1–24; it reads MSDNQSWNSSGSEEDPETESGPPV. A PH domain is found at 23-117; that stretch reads PVERCGVLSK…WIDAIEQHKT (95 aa). A Phosphoserine modification is found at S126. A Phosphoserine; by PKD modification is found at S132. S135 is subject to Phosphoserine. Positions 202-221 are disordered; that stretch reads DDEDDFPTTRSDGDFLHNTN. Residues 268–301 are a coiled coil; sequence KREESWQKRHDKEMEKRRRLEEAYKNAMAELKKK. S315 is modified (phosphoserine). The FFAT signature appears at 321-327; it reads EFFDAVE. The START domain occupies 363–592; the sequence is GTHRFVQKVE…FTSYVQEKTA (230 aa). An N-acylsphing-4-enine is bound by residues E446, Q467, N504, and Y553.

As to quaternary structure, interacts with VAPA and VAPB. Interaction with VAPB is less efficient than with VAPA. Interacts (via FFAT motif) with the MOSPD2 (via MSP domain). In terms of processing, phosphorylation on Ser-132 decreases the affinity toward phosphatidylinositol 4-phosphate at Golgi membranes and reduces ceramide transfer activity. Inactivated by hyperphosphorylation of serine residues by CSNK1G2/CK1 that triggers dissociation from the Golgi complex, thus down-regulating ER-to-Golgi transport of ceramide and sphingomyelin synthesis.

The protein localises to the cytoplasm. It is found in the golgi apparatus. It localises to the endoplasmic reticulum. It carries out the reaction N-hexadecanoylsphing-4-enine(in) = N-hexadecanoylsphing-4-enine(out). In terms of biological role, shelters ceramides and diacylglycerol lipids inside its START domain and mediates the intracellular trafficking of ceramides and diacylglycerol lipids in a non-vesicular manner. In Cricetulus griseus (Chinese hamster), this protein is Ceramide transfer protein (CERT1).